The primary structure comprises 67 residues: Large ribosomal subunit protein uL30 (67 aa).

Belongs to the universal ribosomal protein uL30 family. As to quaternary structure, part of the 50S ribosomal subunit.

The chain is Large ribosomal subunit protein uL30 from Hamiltonella defensa subsp. Acyrthosiphon pisum (strain 5AT).